The following is a 201-amino-acid chain: Ubiquinone biosynthesis accessory factor UbiJ (201 aa).

Residues 15 to 112 (LNTFLYRSPA…QVVQNFVALA (98 aa)) enclose the SCP2 domain.

Belongs to the UbiJ family. As to quaternary structure, component of the Ubi complex metabolon, which regroups five ubiquinone biosynthesis proteins (UbiE, UbiF, UbiG, UbiH and UbiI) and two accessory factors (UbiK and the lipid-binding protein UbiJ). Interacts with UbiK and forms a complex composed of 2 UbiK subunits and 1 UbiJ subunit. The UbiK-UbiJ complex interacts with palmitoleic acid.

It is found in the cytoplasm. It participates in cofactor biosynthesis; ubiquinone biosynthesis. Its function is as follows. Required for ubiquinone (coenzyme Q) biosynthesis under aerobic conditions. Binds hydrophobic ubiquinone biosynthetic intermediates via its SCP2 domain and is essential for the stability of the Ubi complex. May constitute a docking platform where Ubi enzymes assemble and access their SCP2-bound polyprenyl substrates. The sequence is that of Ubiquinone biosynthesis accessory factor UbiJ from Escherichia coli (strain K12).